A 960-amino-acid chain; its full sequence is Phosphoenolpyruvate carboxylase 1 (960 aa).

Ser-7 bears the Phosphoserine mark. Catalysis depends on residues His-168 and Lys-596.

The protein belongs to the PEPCase type 1 family. As to quaternary structure, homotetramer. The cofactor is Mg(2+).

It localises to the cytoplasm. It carries out the reaction oxaloacetate + phosphate = phosphoenolpyruvate + hydrogencarbonate. Its pathway is photosynthesis; C3 acid pathway. With respect to regulation, by light-reversible phosphorylation. In terms of biological role, through the carboxylation of phosphoenolpyruvate (PEP) it forms oxaloacetate, a four-carbon dicarboxylic acid source for the tricarboxylic acid cycle. The polypeptide is Phosphoenolpyruvate carboxylase 1 (PEPC) (Sorghum bicolor (Sorghum)).